We begin with the raw amino-acid sequence, 248 residues long: Adenosylcobinamide-GDP ribazoletransferase (248 aa).

6 helical membrane-spanning segments follow: residues 36–56, 59–79, 113–133, 137–157, 170–190, and 199–219; these read FFLPVVASIIGGMEFLIYLGL, FLPPNVIIVLLLLFTAMITGG, FGTIAMIINLLLKYQLLYSLV, CSIAIILAPVIGRISILFLCL, IFIGNMSKPIIFLITIIALAM, and ITIISFTAVLIITYLFYLLCL.

It belongs to the CobS family. The cofactor is Mg(2+).

It localises to the cell membrane. The enzyme catalyses alpha-ribazole + adenosylcob(III)inamide-GDP = adenosylcob(III)alamin + GMP + H(+). It carries out the reaction alpha-ribazole 5'-phosphate + adenosylcob(III)inamide-GDP = adenosylcob(III)alamin 5'-phosphate + GMP + H(+). It functions in the pathway cofactor biosynthesis; adenosylcobalamin biosynthesis; adenosylcobalamin from cob(II)yrinate a,c-diamide: step 7/7. Joins adenosylcobinamide-GDP and alpha-ribazole to generate adenosylcobalamin (Ado-cobalamin). Also synthesizes adenosylcobalamin 5'-phosphate from adenosylcobinamide-GDP and alpha-ribazole 5'-phosphate. This Clostridium botulinum (strain 657 / Type Ba4) protein is Adenosylcobinamide-GDP ribazoletransferase.